The chain runs to 201 residues: Charged multivesicular body protein 6 (201 aa).

Glycine 2 is lipidated: N-myristoyl glycine. A coiled-coil region spans residues 10–145; the sequence is QSRVTEQDKA…YQRQIDELLA (136 aa). Residue serine 119 is modified to Phosphoserine. Threonine 130 carries the phosphothreonine modification. Positions 168–179 match the Type-2 MIT-interacting motif motif; it reads IELPEVPSEPLP. Residues 171 to 201 are disordered; it reads PEVPSEPLPEKIPEDVPVKARPRQAELVAAS. The segment covering 178–188 has biased composition (basic and acidic residues); the sequence is LPEKIPEDVPV.

It belongs to the SNF7 family. Probable core component of the endosomal sorting required for transport complex III (ESCRT-III). ESCRT-III components are thought to multimerize to form a flat lattice on the perimeter membrane of the endosome. Several assembly forms of ESCRT-III may exist that interact and act sequentially. Interacts with VPS4A; the interaction is direct. Interacts with VPS4B; the interaction is direct. Interacts with CHMP4A, CHMP4B and CHMP4C. Interacts with SNF8, VPS25 and VPS36. In terms of processing, ISGylated in a CHMP5-dependent manner. Isgylation weakens its interaction with VPS4A.

It localises to the endomembrane system. The protein localises to the endosome membrane. The protein resides in the late endosome membrane. It is found in the membrane. Probable core component of the endosomal sorting required for transport complex III (ESCRT-III) which is involved in multivesicular bodies (MVBs) formation and sorting of endosomal cargo proteins into MVBs. MVBs contain intraluminal vesicles (ILVs) that are generated by invagination and scission from the limiting membrane of the endosome and mostly are delivered to lysosomes enabling degradation of membrane proteins, such as stimulated growth factor receptors, lysosomal enzymes and lipids. The MVB pathway appears to require the sequential function of ESCRT-O, -I,-II and -III complexes. ESCRT-III proteins mostly dissociate from the invaginating membrane before the ILV is released. The ESCRT machinery also functions in topologically equivalent membrane fission events, such as the terminal stages of cytokinesis and the budding of enveloped viruses (lentiviruses). ESCRT-III proteins are believed to mediate the necessary vesicle extrusion and/or membrane fission activities, possibly in conjunction with the AAA ATPase VPS4. In the ESCRT-III complex, it probably serves as an acceptor for the ESCRT-II complex on endosomal membrane. The protein is Charged multivesicular body protein 6 (CHMP6) of Pongo abelii (Sumatran orangutan).